The following is a 192-amino-acid chain: ADP-ribosylation factor-like protein 14 (192 aa).

The N-myristoyl glycine moiety is linked to residue G2. GTP is bound by residues G20–S27, D64–Q68, and N123–D126.

Belongs to the small GTPase superfamily. Arf family. As to quaternary structure, interacts with ARL14EP. In terms of tissue distribution, expressed in immature dendritic cells.

The protein resides in the cytoplasmic vesicle. GTPase that recruits MYO1E to MHC class II-containing vesicles via the effector protein ARL14EP and hence controls the movement of these vesicles along the actin cytoskeleton in dendritic cells. This is ADP-ribosylation factor-like protein 14 (ARL14) from Homo sapiens (Human).